A 283-amino-acid polypeptide reads, in one-letter code: ATP synthase gamma chain (283 aa).

It belongs to the ATPase gamma chain family. In terms of assembly, F-type ATPases have 2 components, CF(1) - the catalytic core - and CF(0) - the membrane proton channel. CF(1) has five subunits: alpha(3), beta(3), gamma(1), delta(1), epsilon(1). CF(0) has three main subunits: a, b and c.

It is found in the cell inner membrane. Functionally, produces ATP from ADP in the presence of a proton gradient across the membrane. The gamma chain is believed to be important in regulating ATPase activity and the flow of protons through the CF(0) complex. This Ehrlichia ruminantium (strain Gardel) protein is ATP synthase gamma chain.